We begin with the raw amino-acid sequence, 156 residues long: Transcriptional repressor NrdR (156 aa).

A zinc finger lies at cysteine 3–cysteine 34. One can recognise an ATP-cone domain in the interval leucine 46–aspartate 136.

Belongs to the NrdR family. It depends on Zn(2+) as a cofactor.

Its function is as follows. Negatively regulates transcription of bacterial ribonucleotide reductase nrd genes and operons by binding to NrdR-boxes. The polypeptide is Transcriptional repressor NrdR (Corynebacterium efficiens (strain DSM 44549 / YS-314 / AJ 12310 / JCM 11189 / NBRC 100395)).